Reading from the N-terminus, the 108-residue chain is L-rhamnose mutarotase (108 aa).

Substrate is bound at residue tyrosine 19. The Proton donor role is filled by histidine 23. Substrate contacts are provided by residues tyrosine 45 and 80-81 (WW).

The protein belongs to the rhamnose mutarotase family. Homodimer.

It localises to the cytoplasm. The enzyme catalyses alpha-L-rhamnose = beta-L-rhamnose. It participates in carbohydrate metabolism; L-rhamnose metabolism. Functionally, involved in the anomeric conversion of L-rhamnose. This Ligilactobacillus salivarius (strain UCC118) (Lactobacillus salivarius) protein is L-rhamnose mutarotase.